Consider the following 267-residue polypeptide: Apolipoprotein A-I (267 aa).

The N-terminal stretch at 1-18 (MKATVLTLAVLFLTGSQA) is a signal peptide. 2 repeat units span residues 68–89 (LKLL…EQLG) and 90–111 (PVTQ…QEMS). Residues 68 to 267 (LKLLDNWDSV…EEYTKKLSTQ (200 aa)) are 10 X approximate tandem repeats. Residue M110 is modified to Methionine sulfoxide. The 3; half-length repeat unit spans residues 112-122 (KDLEEVKAKVQ). 5 consecutive repeat copies span residues 123–144 (PYLD…QKVE), 145–166 (PLRA…EKLS), 167–188 (PLGE…THLA), 189–210 (PYSD…ENGG), and 211–232 (ARLA…EKAK). M136 carries the post-translational modification Methionine sulfoxide. The stretch at 233–243 (PALEDLRQGLL) is one 9; half-length repeat. The stretch at 244-267 (PVLESFKVSFLSALEEYTKKLSTQ) is repeat 10.

Belongs to the apolipoprotein A1/A4/E family. As to quaternary structure, homodimer. Interacts with APOA1BP and CLU. Component of a sperm activating protein complex (SPAP), consisting of APOA1, an immunoglobulin heavy chain, an immunoglobulin light chain and albumin. Interacts with NDRG1. Interacts with SCGB3A2. Interacts with NAXE and YJEFN3. Post-translationally, glycosylated. In terms of processing, palmitoylated. Phosphorylation sites are present in the extracellular medium. Major protein of plasma HDL, also found in chylomicrons.

The protein resides in the secreted. In terms of biological role, participates in the reverse transport of cholesterol from tissues to the liver for excretion by promoting cholesterol efflux from tissues and by acting as a cofactor for the lecithin cholesterol acyltransferase (LCAT). As part of the SPAP complex, activates spermatozoa motility. The protein is Apolipoprotein A-I (APOA1) of Papio hamadryas (Hamadryas baboon).